Here is a 160-residue protein sequence, read N- to C-terminus: Lipoprotein signal peptidase (160 aa).

2 helical membrane-spanning segments follow: residues 60–80 (IEWL…AFFI) and 84–104 (LPFL…AGTV). Active-site residues include aspartate 118 and aspartate 132. Residues 128 to 148 (FNIADSCLTVGVIGLLLLYIV) traverse the membrane as a helical segment.

This sequence belongs to the peptidase A8 family.

The protein resides in the cell membrane. It carries out the reaction Release of signal peptides from bacterial membrane prolipoproteins. Hydrolyzes -Xaa-Yaa-Zaa-|-(S,diacylglyceryl)Cys-, in which Xaa is hydrophobic (preferably Leu), and Yaa (Ala or Ser) and Zaa (Gly or Ala) have small, neutral side chains.. It functions in the pathway protein modification; lipoprotein biosynthesis (signal peptide cleavage). In terms of biological role, this protein specifically catalyzes the removal of signal peptides from prolipoproteins. The polypeptide is Lipoprotein signal peptidase (Dehalococcoides mccartyi (strain CBDB1)).